Here is a 133-residue protein sequence, read N- to C-terminus: Ribosome-binding factor A (133 aa).

Belongs to the RbfA family. Monomer. Binds 30S ribosomal subunits, but not 50S ribosomal subunits or 70S ribosomes.

The protein resides in the cytoplasm. In terms of biological role, one of several proteins that assist in the late maturation steps of the functional core of the 30S ribosomal subunit. Associates with free 30S ribosomal subunits (but not with 30S subunits that are part of 70S ribosomes or polysomes). Required for efficient processing of 16S rRNA. May interact with the 5'-terminal helix region of 16S rRNA. This chain is Ribosome-binding factor A, found in Cronobacter sakazakii (strain ATCC BAA-894) (Enterobacter sakazakii).